The chain runs to 512 residues: Glycerol kinase (512 aa).

T13 is an ADP binding site. The ATP site is built by T13, T14, and S15. T13 serves as a coordination point for sn-glycerol 3-phosphate. An ADP-binding site is contributed by R17. 4 residues coordinate sn-glycerol 3-phosphate: R83, E84, Y135, and D252. Glycerol-binding residues include R83, E84, Y135, D252, and Q253. 2 residues coordinate ADP: T274 and G318. 4 residues coordinate ATP: T274, G318, Q322, and G419. 2 residues coordinate ADP: G419 and N423.

This sequence belongs to the FGGY kinase family.

It catalyses the reaction glycerol + ATP = sn-glycerol 3-phosphate + ADP + H(+). It participates in polyol metabolism; glycerol degradation via glycerol kinase pathway; sn-glycerol 3-phosphate from glycerol: step 1/1. Its activity is regulated as follows. Inhibited by fructose 1,6-bisphosphate (FBP). Key enzyme in the regulation of glycerol uptake and metabolism. Catalyzes the phosphorylation of glycerol to yield sn-glycerol 3-phosphate. The sequence is that of Glycerol kinase from Corynebacterium kroppenstedtii (strain DSM 44385 / JCM 11950 / CIP 105744 / CCUG 35717).